The sequence spans 256 residues: Fructose-1,6-bisphosphatase/inositol-1-monophosphatase (256 aa).

Mg(2+) contacts are provided by glutamate 65, aspartate 79, isoleucine 81, and aspartate 82. Residues 82–84 (DGT), arginine 172, alanine 177, and arginine 196 contribute to the substrate site. Residue aspartate 201 participates in Mg(2+) binding.

Belongs to the inositol monophosphatase superfamily. FBPase class 4 family. As to quaternary structure, homotetramer. It depends on Mg(2+) as a cofactor.

The catalysed reaction is beta-D-fructose 1,6-bisphosphate + H2O = beta-D-fructose 6-phosphate + phosphate. It carries out the reaction a myo-inositol phosphate + H2O = myo-inositol + phosphate. Its activity is regulated as follows. In contrast to mammalian I-1-P phosphatases, is only weakly inhibited by Li(+), since 50% inhibitory concentration for Li(+) is about 100 mM, and the Li(+) concentration required to totally abolish I-1-Pase activity is 1 M. Phosphatase with broad specificity; it can dephosphorylate fructose 1,6-bisphosphate, both D and L isomers of inositol-1-phosphate (I-1-P) but displaying a 20-fold higher rate of hydrolysis of D-I-1-P than of the L isomer, 2'-AMP, pNPP, inositol-2-phosphate, beta-glycerol phosphate, and alpha-D-glucose-1-phosphate. Cannot hydrolyze glucose-6-phosphate, fructose-6-phosphate, 5'-AMP and NAD(+). May be involved in the biosynthesis of a unique osmolyte, di-myo-inositol 1,1-phosphate. In Thermotoga maritima (strain ATCC 43589 / DSM 3109 / JCM 10099 / NBRC 100826 / MSB8), this protein is Fructose-1,6-bisphosphatase/inositol-1-monophosphatase (suhB).